A 438-amino-acid chain; its full sequence is Methylenetetrahydrofolate--tRNA-(uracil-5-)-methyltransferase TrmFO (438 aa).

FAD is bound at residue 9 to 14 (GGGLAG).

It belongs to the MnmG family. TrmFO subfamily. The cofactor is FAD.

The protein resides in the cytoplasm. It carries out the reaction uridine(54) in tRNA + (6R)-5,10-methylene-5,6,7,8-tetrahydrofolate + NADH + H(+) = 5-methyluridine(54) in tRNA + (6S)-5,6,7,8-tetrahydrofolate + NAD(+). It catalyses the reaction uridine(54) in tRNA + (6R)-5,10-methylene-5,6,7,8-tetrahydrofolate + NADPH + H(+) = 5-methyluridine(54) in tRNA + (6S)-5,6,7,8-tetrahydrofolate + NADP(+). Catalyzes the folate-dependent formation of 5-methyl-uridine at position 54 (M-5-U54) in all tRNAs. This Lactobacillus johnsonii (strain CNCM I-12250 / La1 / NCC 533) protein is Methylenetetrahydrofolate--tRNA-(uracil-5-)-methyltransferase TrmFO.